Reading from the N-terminus, the 130-residue chain is Fumarate reductase subunit C (130 aa).

A run of 3 helical transmembrane segments spans residues 34 to 54, 60 to 80, and 109 to 129; these read VPAV…KGGV, FVGF…LLAA, and IVKT…AVAL.

It belongs to the FrdC family. Part of an enzyme complex containing four subunits: a flavoprotein (FrdA), an iron-sulfur protein (FrdB), and two hydrophobic anchor proteins (FrdC and FrdD).

The protein resides in the cell inner membrane. Functionally, two distinct, membrane-bound, FAD-containing enzymes are responsible for the catalysis of fumarate and succinate interconversion; fumarate reductase is used in anaerobic growth, and succinate dehydrogenase is used in aerobic growth. Anchors the catalytic components of the fumarate reductase complex to the cell inner membrane, binds quinones. The chain is Fumarate reductase subunit C from Serratia proteamaculans (strain 568).